A 153-amino-acid chain; its full sequence is HTH-type transcriptional regulator Zrp (153 aa).

Residues 2 to 63 form the HTH asnC-type domain; the sequence is IDYRDRHILS…LLDRKKINLP (62 aa). Positions 21 to 40 form a DNA-binding region, H-T-H motif; that stretch reads LAEIAERVALSVSACSRRVA.

The polypeptide is HTH-type transcriptional regulator Zrp (zrp) (Zymomonas mobilis subsp. mobilis (strain ATCC 10988 / DSM 424 / LMG 404 / NCIMB 8938 / NRRL B-806 / ZM1)).